The sequence spans 345 residues: 4-hydroxyproline 2-epimerase 1 (345 aa).

A substrate-binding site is contributed by glutamine 85. Serine 93 functions as the Proton acceptor in the catalytic mechanism. Residues 94–95 (GS) and aspartate 251 contribute to the substrate site. Cysteine 255 functions as the Proton donor in the catalytic mechanism. 256-257 (GT) is a binding site for substrate.

This sequence belongs to the proline racemase family.

The catalysed reaction is trans-4-hydroxy-L-proline = cis-4-hydroxy-D-proline. Catalyzes the epimerization of trans-4-hydroxy-L-proline (t4LHyp) to cis-4-hydroxy-D-proline (c4DHyp). May be involved in a degradation pathway of t4LHyp. Can also catalyze the epimerization of trans-3-hydroxy-L-proline (t3LHyp) to cis-3-hydroxy-D-proline (c3DHyp) in vitro. Displays no proline racemase activity. This Rhizobium rhizogenes (strain K84 / ATCC BAA-868) (Agrobacterium radiobacter) protein is 4-hydroxyproline 2-epimerase 1.